A 473-amino-acid chain; its full sequence is Ribulose bisphosphate carboxylase large chain (473 aa).

Residues asparagine 116 and threonine 166 each contribute to the substrate site. Lysine 168 functions as the Proton acceptor in the catalytic mechanism. Lysine 170 contributes to the substrate binding site. Mg(2+) contacts are provided by lysine 194, aspartate 196, and glutamate 197. Lysine 194 carries the N6-carboxylysine modification. Residue histidine 287 is the Proton acceptor of the active site. 3 residues coordinate substrate: arginine 288, histidine 320, and serine 372.

This sequence belongs to the RuBisCO large chain family. Type I subfamily. Heterohexadecamer of 8 large chains and 8 small chains. Mg(2+) serves as cofactor.

The catalysed reaction is 2 (2R)-3-phosphoglycerate + 2 H(+) = D-ribulose 1,5-bisphosphate + CO2 + H2O. It catalyses the reaction D-ribulose 1,5-bisphosphate + O2 = 2-phosphoglycolate + (2R)-3-phosphoglycerate + 2 H(+). RuBisCO catalyzes two reactions: the carboxylation of D-ribulose 1,5-bisphosphate, the primary event in carbon dioxide fixation, as well as the oxidative fragmentation of the pentose substrate. Both reactions occur simultaneously and in competition at the same active site. The protein is Ribulose bisphosphate carboxylase large chain of Nitrosomonas europaea (strain ATCC 19718 / CIP 103999 / KCTC 2705 / NBRC 14298).